We begin with the raw amino-acid sequence, 592 residues long: Aspartate--tRNA ligase (592 aa).

Glutamate 173 contributes to the L-aspartate binding site. Residues 197-200 are aspartate; sequence QLFK. Residue arginine 219 coordinates L-aspartate. ATP contacts are provided by residues 219–221 and glutamine 228; that span reads RDE. L-aspartate is bound at residue histidine 448. Position 482 (glutamate 482) interacts with ATP. Arginine 489 provides a ligand contact to L-aspartate. Residue 534 to 537 participates in ATP binding; the sequence is GLDR.

This sequence belongs to the class-II aminoacyl-tRNA synthetase family. Type 1 subfamily. In terms of assembly, homodimer.

The protein resides in the cytoplasm. The catalysed reaction is tRNA(Asp) + L-aspartate + ATP = L-aspartyl-tRNA(Asp) + AMP + diphosphate. Functionally, catalyzes the attachment of L-aspartate to tRNA(Asp) in a two-step reaction: L-aspartate is first activated by ATP to form Asp-AMP and then transferred to the acceptor end of tRNA(Asp). The sequence is that of Aspartate--tRNA ligase from Shewanella putrefaciens (strain CN-32 / ATCC BAA-453).